Consider the following 374-residue polypeptide: Cell division cycle-associated protein 7 (374 aa).

2 disordered regions span residues 53–110 (ANRE…EDES) and 138–208 (SFPG…EEDK). A Phosphoserine modification is found at S142. The segment at 146-170 (RRSLPGPSSRPKTPRRRTFPGVACR) is interaction with MYC. The short motif at 160–176 (RRRTFPGVACRRNPERR) is the Nuclear localization signal element. T163 is subject to Phosphothreonine. A Phosphoserine modification is found at S190. T196 carries the post-translational modification Phosphothreonine. Residues 196-207 (TEEEEEEEEEED) are compositionally biased toward acidic residues. K208 is covalently cross-linked (Glycyl lysine isopeptide (Lys-Gly) (interchain with G-Cter in SUMO2)). Residue S217 is modified to Phosphoserine. The interval 250–374 (EEELENICNN…SLKQEFEMQG (125 aa)) is mediates transcriptional activity.

In terms of assembly, interacts with MYC (via C-terminus), YWHAE and YWHAZ. Post-translationally, phosphorylation at Thr-163 promotes interaction with YWHAE and YWHAZ, dissociation from MYC and sequestration in the cytoplasm.

The protein resides in the nucleus. Its subcellular location is the cytoplasm. Its function is as follows. Participates in MYC-mediated cell transformation and apoptosis; induces anchorage-independent growth and clonogenicity in lymphoblastoid cells. Insufficient to induce tumorigenicity when overexpressed but contributes to MYC-mediated tumorigenesis. May play a role as transcriptional regulator. The polypeptide is Cell division cycle-associated protein 7 (CDCA7) (Bos taurus (Bovine)).